The primary structure comprises 88 residues: Large ribosomal subunit protein eL37 (88 aa).

Zn(2+)-binding residues include Cys-19, Cys-22, Cys-34, and Cys-37. The segment at 19 to 37 adopts a C4-type zinc-finger fold; it reads CNRCGKRSFHVQKKTCASC.

This sequence belongs to the eukaryotic ribosomal protein eL37 family. It depends on Zn(2+) as a cofactor.

In terms of biological role, binds to the 23S rRNA. The protein is Large ribosomal subunit protein eL37 (RPL37) of Debaryomyces hansenii (strain ATCC 36239 / CBS 767 / BCRC 21394 / JCM 1990 / NBRC 0083 / IGC 2968) (Yeast).